The following is an 83-amino-acid chain: Protein YciN (83 aa).

The chain is Protein YciN (yciN) from Escherichia coli O157:H7.